The following is a 237-amino-acid chain: uncharacterized protein (237 aa).

The region spanning 4–237 (QFLIAHRGYS…VKFQIAAQLY (234 aa)) is the GP-PDE domain.

To glycerophosphoryl diester phosphodiesterases (EC 3.1.4.46). The protein to M.genitalium MG293.

This is an uncharacterized protein from Mycoplasma pneumoniae (strain ATCC 29342 / M129 / Subtype 1) (Mycoplasmoides pneumoniae).